The sequence spans 276 residues: Phosphate import ATP-binding protein PstB (276 aa).

The region spanning 23–271 is the ABC transporter domain; sequence VNNKNIVYDT…PSDQRTEDYI (249 aa). 62-69 is an ATP binding site; the sequence is GPSGCGKS.

It belongs to the ABC transporter superfamily. Phosphate importer (TC 3.A.1.7) family. In terms of assembly, the complex is composed of two ATP-binding proteins (PstB), two transmembrane proteins (PstC and PstA) and a solute-binding protein (PstS).

The protein resides in the cell membrane. It catalyses the reaction phosphate(out) + ATP + H2O = ADP + 2 phosphate(in) + H(+). Functionally, part of the ABC transporter complex PstSACB involved in phosphate import. Responsible for energy coupling to the transport system. The chain is Phosphate import ATP-binding protein PstB from Oceanobacillus iheyensis (strain DSM 14371 / CIP 107618 / JCM 11309 / KCTC 3954 / HTE831).